A 91-amino-acid polypeptide reads, in one-letter code: DNA-directed RNA polymerase subunit omega (91 aa).

This sequence belongs to the RNA polymerase subunit omega family. As to quaternary structure, the RNAP catalytic core consists of 2 alpha, 1 beta, 1 beta' and 1 omega subunit. When a sigma factor is associated with the core the holoenzyme is formed, which can initiate transcription.

It catalyses the reaction RNA(n) + a ribonucleoside 5'-triphosphate = RNA(n+1) + diphosphate. Promotes RNA polymerase assembly. Latches the N- and C-terminal regions of the beta' subunit thereby facilitating its interaction with the beta and alpha subunits. The polypeptide is DNA-directed RNA polymerase subunit omega (Nocardia farcinica (strain IFM 10152)).